Here is a 116-residue protein sequence, read N- to C-terminus: Iron-sulfur cluster insertion protein ErpA (116 aa).

Iron-sulfur cluster contacts are provided by Cys-44, Cys-108, and Cys-110.

Belongs to the HesB/IscA family. As to quaternary structure, homodimer. Iron-sulfur cluster is required as a cofactor.

Functionally, required for insertion of 4Fe-4S clusters for at least IspG. This Pseudomonas fluorescens (strain Pf0-1) protein is Iron-sulfur cluster insertion protein ErpA.